An 864-amino-acid polypeptide reads, in one-letter code: Probable LRR receptor-like serine/threonine-protein kinase At1g07550 (864 aa).

A signal peptide spans 1-23 (MDTCTRLLFAACATLSILHLVQS). Topologically, residues 24-507 (QNQQGFISLD…SCGTRFPTAA (484 aa)) are extracellular. N-linked (GlcNAc...) asparagine glycosylation is found at asparagine 49, asparagine 229, asparagine 256, asparagine 289, asparagine 432, asparagine 445, and asparagine 464. LRR repeat units lie at residues 411–434 (RIVKLDLSSSGLNGVIPPSIQNLT), 435–457 (QLQELDLSQNNLTGKVPEFLAKM), and 459–480 (YLLVINLSGNKLSGLVPQALLD). A helical membrane pass occupies residues 508 to 528 (VAASVSAVAIIILVLVLIFVL). At 529 to 864 (RRRKPSAGKV…VDTEINPKAR (336 aa)) the chain is on the cytoplasmic side. At threonine 551 the chain carries Phosphothreonine. The Protein kinase domain occupies 560–831 (NNFQVVIGKG…QVVHVLNECL (272 aa)). ATP is bound by residues 566–574 (IGKGGFGVV) and lysine 587. A Phosphotyrosine modification is found at tyrosine 632. Residue aspartate 684 is the Proton acceptor of the active site. 2 positions are modified to phosphothreonine: threonine 718 and threonine 723. Tyrosine 731 is subject to Phosphotyrosine.

Belongs to the protein kinase superfamily. Ser/Thr protein kinase family.

The protein localises to the membrane. It carries out the reaction L-seryl-[protein] + ATP = O-phospho-L-seryl-[protein] + ADP + H(+). It catalyses the reaction L-threonyl-[protein] + ATP = O-phospho-L-threonyl-[protein] + ADP + H(+). The protein is Probable LRR receptor-like serine/threonine-protein kinase At1g07550 of Arabidopsis thaliana (Mouse-ear cress).